Reading from the N-terminus, the 117-residue chain is Large ribosomal subunit protein bL20 (117 aa).

It belongs to the bacterial ribosomal protein bL20 family.

Its function is as follows. Binds directly to 23S ribosomal RNA and is necessary for the in vitro assembly process of the 50S ribosomal subunit. It is not involved in the protein synthesizing functions of that subunit. The polypeptide is Large ribosomal subunit protein bL20 (Aliivibrio fischeri (strain ATCC 700601 / ES114) (Vibrio fischeri)).